A 100-amino-acid chain; its full sequence is Integration host factor subunit alpha (100 aa).

It belongs to the bacterial histone-like protein family. Heterodimer of an alpha and a beta chain.

Functionally, this protein is one of the two subunits of integration host factor, a specific DNA-binding protein that functions in genetic recombination as well as in transcriptional and translational control. The polypeptide is Integration host factor subunit alpha (Ruegeria pomeroyi (strain ATCC 700808 / DSM 15171 / DSS-3) (Silicibacter pomeroyi)).